The primary structure comprises 132 residues: Putative flagella-related protein F (132 aa).

An N-terminal signal peptide occupies residues 1-18; sequence MGFSSTVGSVLILTTLLI. At Cys19 the chain carries N-acetylcysteine. Cys19 carries S-archaeol cysteine lipidation.

To M.jannaschii FlaF.

It localises to the archaeal flagellum. The protein is Putative flagella-related protein F (flaF) of Methanococcus voltae.